A 188-amino-acid polypeptide reads, in one-letter code: Adenine phosphoribosyltransferase (188 aa).

The protein belongs to the purine/pyrimidine phosphoribosyltransferase family. As to quaternary structure, homodimer.

The protein localises to the cytoplasm. It catalyses the reaction AMP + diphosphate = 5-phospho-alpha-D-ribose 1-diphosphate + adenine. The protein operates within purine metabolism; AMP biosynthesis via salvage pathway; AMP from adenine: step 1/1. Its function is as follows. Catalyzes a salvage reaction resulting in the formation of AMP, that is energically less costly than de novo synthesis. The sequence is that of Adenine phosphoribosyltransferase from Burkholderia cenocepacia (strain HI2424).